Consider the following 404-residue polypeptide: S-adenosylmethionine synthase (404 aa).

H17 serves as a coordination point for ATP. D19 lines the Mg(2+) pocket. Residue E45 coordinates K(+). The L-methionine site is built by E58 and Q101. The flexible loop stretch occupies residues 101–111; it reads QSPDIAMGVDQ. Residues 177–179, 244–245, D253, 259–260, A276, and K280 each bind ATP; these read DGK, RF, and RK. D253 serves as a coordination point for L-methionine. K284 serves as a coordination point for L-methionine.

This sequence belongs to the AdoMet synthase family. In terms of assembly, homotetramer; dimer of dimers. It depends on Mg(2+) as a cofactor. K(+) serves as cofactor.

The protein localises to the cytoplasm. The catalysed reaction is L-methionine + ATP + H2O = S-adenosyl-L-methionine + phosphate + diphosphate. Its pathway is amino-acid biosynthesis; S-adenosyl-L-methionine biosynthesis; S-adenosyl-L-methionine from L-methionine: step 1/1. Its function is as follows. Catalyzes the formation of S-adenosylmethionine (AdoMet) from methionine and ATP. The overall synthetic reaction is composed of two sequential steps, AdoMet formation and the subsequent tripolyphosphate hydrolysis which occurs prior to release of AdoMet from the enzyme. This chain is S-adenosylmethionine synthase, found in Geobacillus thermodenitrificans (strain NG80-2).